The primary structure comprises 122 residues: Large ribosomal subunit protein uL14 (122 aa).

It belongs to the universal ribosomal protein uL14 family. Part of the 50S ribosomal subunit. Forms a cluster with proteins L3 and L19. In the 70S ribosome, L14 and L19 interact and together make contacts with the 16S rRNA in bridges B5 and B8.

Binds to 23S rRNA. Forms part of two intersubunit bridges in the 70S ribosome. This Mycobacterium sp. (strain KMS) protein is Large ribosomal subunit protein uL14.